The following is a 464-amino-acid chain: Cysteine--tRNA ligase (464 aa).

Cysteine 27 lines the Zn(2+) pocket. The 'HIGH' region signature appears at 29–39 (PTVYNYFHIGN). Cysteine 207, histidine 232, and glutamate 236 together coordinate Zn(2+). The short motif at 264 to 268 (KMSKS) is the 'KMSKS' region element. Residue lysine 267 coordinates ATP.

The protein belongs to the class-I aminoacyl-tRNA synthetase family. In terms of assembly, monomer. Zn(2+) serves as cofactor.

Its subcellular location is the cytoplasm. It carries out the reaction tRNA(Cys) + L-cysteine + ATP = L-cysteinyl-tRNA(Cys) + AMP + diphosphate. The polypeptide is Cysteine--tRNA ligase (Alkaliphilus oremlandii (strain OhILAs) (Clostridium oremlandii (strain OhILAs))).